The sequence spans 386 residues: uncharacterized protein (386 aa).

A run of 12 helical transmembrane segments spans residues 8 to 28 (VFVI…IAPI), 43 to 63 (IGLI…PVGV), 79 to 99 (FFYG…GFLI), 102 to 122 (IFTG…IAAI), 134 to 154 (IFNS…GILA), 156 to 176 (MYGI…AAII), 216 to 236 (FIIN…LALY), 241 to 261 (NITI…MALL), 272 to 292 (LGNI…YLLS), 297 to 317 (FLTI…SSTA), 342 to 362 (INIG…ILGI), and 365 to 385 (MYKF…LRIE).

This sequence belongs to the major facilitator superfamily.

The protein resides in the cell membrane. This is an uncharacterized protein from Methanocaldococcus jannaschii (strain ATCC 43067 / DSM 2661 / JAL-1 / JCM 10045 / NBRC 100440) (Methanococcus jannaschii).